Here is a 312-residue protein sequence, read N- to C-terminus: MIEFEKPIITKIDENKDYGRFVIEPLERGYGTTLGNSLRRVLLSSLPGAAVTSIKIDGVLHEFDTIPGVREDVMQIILNIKGLAVKSYVEEEKIVELDVEGPAEITAGDILTDSDIEIVNPDHYLFTIAEGANLKATMTVATNRGYVPAEKNKRDDAPVGTLAIDSIYTPVKKVNYQVEPARVGSNDNFDKLTIEIMTNGTIIPEDALGLSARVLIEHLNLFTDLTEVAKATDVMKETEQVSDEKVLDRTIEELDLSVRSYNCLKRAGINTVYDLTEKSESEMMKVRNLGRKSLEEVKVKLADLGLGLKNDK.

The interval 1–226 (MIEFEKPIIT…EHLNLFTDLT (226 aa)) is alpha N-terminal domain (alpha-NTD). An alpha C-terminal domain (alpha-CTD) region spans residues 243 to 312 (DEKVLDRTIE…DLGLGLKNDK (70 aa)).

Belongs to the RNA polymerase alpha chain family. As to quaternary structure, homodimer. The RNAP catalytic core consists of 2 alpha, 1 beta, 1 beta' and 1 omega subunit. When a sigma factor is associated with the core the holoenzyme is formed, which can initiate transcription.

The catalysed reaction is RNA(n) + a ribonucleoside 5'-triphosphate = RNA(n+1) + diphosphate. In terms of biological role, DNA-dependent RNA polymerase catalyzes the transcription of DNA into RNA using the four ribonucleoside triphosphates as substrates. The protein is DNA-directed RNA polymerase subunit alpha of Streptococcus mutans serotype c (strain ATCC 700610 / UA159).